The primary structure comprises 204 residues: Ribosomal RNA small subunit methyltransferase G (204 aa).

Residues G73, F78, and R139 each coordinate S-adenosyl-L-methionine.

Belongs to the methyltransferase superfamily. RNA methyltransferase RsmG family.

It is found in the cytoplasm. The enzyme catalyses guanosine(527) in 16S rRNA + S-adenosyl-L-methionine = N(7)-methylguanosine(527) in 16S rRNA + S-adenosyl-L-homocysteine. Its function is as follows. Specifically methylates the N7 position of guanine in position 527 of 16S rRNA. The polypeptide is Ribosomal RNA small subunit methyltransferase G (Coxiella burnetii (strain CbuG_Q212) (Coxiella burnetii (strain Q212))).